Consider the following 72-residue polypeptide: Bowman-Birk type proteinase inhibitor 2a (72 aa).

Intrachain disulfides connect Cys-8–Cys-61, Cys-9–Cys-24, Cys-12–Cys-57, Cys-14–Cys-22, Cys-31–Cys-38, Cys-35–Cys-50, and Cys-40–Cys-48.

Dimer.

In terms of biological role, inhibits trypsin (IC(50)=0.9 nM) and alpha-chymotrypsin (IC(50)=1.1 nM). This is Bowman-Birk type proteinase inhibitor 2a from Lathyrus sativus (White vetchling).